The sequence spans 199 residues: Peptidyl-tRNA hydrolase (199 aa).

Tyr-25 contributes to the tRNA binding site. The Proton acceptor role is filled by His-30. TRNA-binding residues include Tyr-76, Asn-78, and Asn-124.

This sequence belongs to the PTH family. In terms of assembly, monomer.

The protein resides in the cytoplasm. The enzyme catalyses an N-acyl-L-alpha-aminoacyl-tRNA + H2O = an N-acyl-L-amino acid + a tRNA + H(+). Functionally, hydrolyzes ribosome-free peptidyl-tRNAs (with 1 or more amino acids incorporated), which drop off the ribosome during protein synthesis, or as a result of ribosome stalling. Its function is as follows. Catalyzes the release of premature peptidyl moieties from peptidyl-tRNA molecules trapped in stalled 50S ribosomal subunits, and thus maintains levels of free tRNAs and 50S ribosomes. The polypeptide is Peptidyl-tRNA hydrolase (Mycobacterium leprae (strain Br4923)).